The chain runs to 426 residues: Tryptophan synthase beta chain (426 aa).

An N6-(pyridoxal phosphate)lysine modification is found at lysine 108.

The protein belongs to the TrpB family. As to quaternary structure, tetramer of two alpha and two beta chains. It depends on pyridoxal 5'-phosphate as a cofactor.

The enzyme catalyses (1S,2R)-1-C-(indol-3-yl)glycerol 3-phosphate + L-serine = D-glyceraldehyde 3-phosphate + L-tryptophan + H2O. The protein operates within amino-acid biosynthesis; L-tryptophan biosynthesis; L-tryptophan from chorismate: step 5/5. The beta subunit is responsible for the synthesis of L-tryptophan from indole and L-serine. The protein is Tryptophan synthase beta chain (trpB) of Thermoplasma volcanium (strain ATCC 51530 / DSM 4299 / JCM 9571 / NBRC 15438 / GSS1).